The following is a 197-amino-acid chain: ATP-dependent Clp protease proteolytic subunit (197 aa).

Catalysis depends on serine 102, which acts as the Nucleophile. Histidine 127 is a catalytic residue.

The protein belongs to the peptidase S14 family. In terms of assembly, fourteen ClpP subunits assemble into 2 heptameric rings which stack back to back to give a disk-like structure with a central cavity, resembling the structure of eukaryotic proteasomes.

Its subcellular location is the cytoplasm. The catalysed reaction is Hydrolysis of proteins to small peptides in the presence of ATP and magnesium. alpha-casein is the usual test substrate. In the absence of ATP, only oligopeptides shorter than five residues are hydrolyzed (such as succinyl-Leu-Tyr-|-NHMec, and Leu-Tyr-Leu-|-Tyr-Trp, in which cleavage of the -Tyr-|-Leu- and -Tyr-|-Trp bonds also occurs).. Cleaves peptides in various proteins in a process that requires ATP hydrolysis. Has a chymotrypsin-like activity. Plays a major role in the degradation of misfolded proteins. The polypeptide is ATP-dependent Clp protease proteolytic subunit (Buchnera aphidicola subsp. Schizaphis graminum (strain Sg)).